We begin with the raw amino-acid sequence, 463 residues long: Cytochrome c-552 (463 aa).

An N-terminal signal peptide occupies residues 1–23 (MNVKSIALSAVIATSFLAAGAMA). Residue His-83 coordinates heme c. The heme site is built by Cys-111, Cys-114, and Lys-115. Residues Cys-149, Cys-152, His-153, Cys-191, Cys-194, and His-195 each coordinate heme c. Ca(2+)-binding residues include Glu-197, Tyr-198, Lys-246, and Gln-248. A substrate-binding site is contributed by Tyr-198. Residue His-249 coordinates substrate. 9 residues coordinate heme c: His-260, Cys-267, Cys-270, His-271, His-286, Cys-299, Cys-302, His-303, and His-378.

Belongs to the cytochrome c-552 family. The cofactor is Ca(2+). Heme c serves as cofactor.

The protein resides in the periplasm. The enzyme catalyses 6 Fe(III)-[cytochrome c] + NH4(+) + 2 H2O = 6 Fe(II)-[cytochrome c] + nitrite + 8 H(+). It participates in nitrogen metabolism; nitrate reduction (assimilation). Its function is as follows. Catalyzes the reduction of nitrite to ammonia, consuming six electrons in the process. In Shewanella frigidimarina (strain NCIMB 400), this protein is Cytochrome c-552.